We begin with the raw amino-acid sequence, 251 residues long: Zinc import ATP-binding protein ZnuC (251 aa).

In terms of domain architecture, ABC transporter spans 5-220 (VSLENVSVSF…PEFISMFGPR (216 aa)). 37–44 (GPNGAGKS) contacts ATP.

It belongs to the ABC transporter superfamily. Zinc importer (TC 3.A.1.15.5) family. In terms of assembly, the complex is composed of two ATP-binding proteins (ZnuC), two transmembrane proteins (ZnuB) and a solute-binding protein (ZnuA).

The protein localises to the cell inner membrane. The catalysed reaction is Zn(2+)(out) + ATP(in) + H2O(in) = Zn(2+)(in) + ADP(in) + phosphate(in) + H(+)(in). Its function is as follows. Part of the ABC transporter complex ZnuABC involved in zinc import. Responsible for energy coupling to the transport system. The chain is Zinc import ATP-binding protein ZnuC from Escherichia coli O157:H7.